Reading from the N-terminus, the 423-residue chain is Gamma-glutamyl phosphate reductase (423 aa).

Belongs to the gamma-glutamyl phosphate reductase family.

The protein localises to the cytoplasm. It catalyses the reaction L-glutamate 5-semialdehyde + phosphate + NADP(+) = L-glutamyl 5-phosphate + NADPH + H(+). The protein operates within amino-acid biosynthesis; L-proline biosynthesis; L-glutamate 5-semialdehyde from L-glutamate: step 2/2. Catalyzes the NADPH-dependent reduction of L-glutamate 5-phosphate into L-glutamate 5-semialdehyde and phosphate. The product spontaneously undergoes cyclization to form 1-pyrroline-5-carboxylate. This is Gamma-glutamyl phosphate reductase from Paraburkholderia phytofirmans (strain DSM 17436 / LMG 22146 / PsJN) (Burkholderia phytofirmans).